The primary structure comprises 92 residues: Precursor of elicitor peptide 1 (92 aa).

Residues Met1–Arg69 constitute a propeptide that is removed on maturation. A disordered region spans residues His35–Asn92. A compositionally biased stretch (polar residues) spans Asp37–Lys48. The segment covering Gln49–Val64 has biased composition (basic and acidic residues).

The protein belongs to the brassicaceae elicitor peptide family. As to quaternary structure, interacts with its receptor PEPR1.

In terms of biological role, elicitor of plant defense. Induces the production of plant defensin (PDF1.2) and of H(2)O(2). Promotes resistance to the root fungal pathogen P.irregulare. Triggers the expression of several PROSCOOP genes (e.g. PROSCOOP2, PROSCOOP7, PROSCOOP8, PROSCOOP12 and PROSCOOP13). The polypeptide is Precursor of elicitor peptide 1 (Arabidopsis thaliana (Mouse-ear cress)).